The following is a 106-amino-acid chain: Nucleoid-associated protein RPD_0086 (106 aa).

Belongs to the YbaB/EbfC family. Homodimer.

Its subcellular location is the cytoplasm. The protein localises to the nucleoid. Its function is as follows. Binds to DNA and alters its conformation. May be involved in regulation of gene expression, nucleoid organization and DNA protection. This is Nucleoid-associated protein RPD_0086 from Rhodopseudomonas palustris (strain BisB5).